The sequence spans 145 residues: D-aminoacyl-tRNA deacylase (145 aa).

The Gly-cisPro motif, important for rejection of L-amino acids signature appears at 137–138; the sequence is GP.

The protein belongs to the DTD family. Homodimer.

It is found in the cytoplasm. It carries out the reaction glycyl-tRNA(Ala) + H2O = tRNA(Ala) + glycine + H(+). It catalyses the reaction a D-aminoacyl-tRNA + H2O = a tRNA + a D-alpha-amino acid + H(+). Its function is as follows. An aminoacyl-tRNA editing enzyme that deacylates mischarged D-aminoacyl-tRNAs. Also deacylates mischarged glycyl-tRNA(Ala), protecting cells against glycine mischarging by AlaRS. Acts via tRNA-based rather than protein-based catalysis; rejects L-amino acids rather than detecting D-amino acids in the active site. By recycling D-aminoacyl-tRNA to D-amino acids and free tRNA molecules, this enzyme counteracts the toxicity associated with the formation of D-aminoacyl-tRNA entities in vivo and helps enforce protein L-homochirality. This Exiguobacterium sibiricum (strain DSM 17290 / CCUG 55495 / CIP 109462 / JCM 13490 / 255-15) protein is D-aminoacyl-tRNA deacylase.